Consider the following 224-residue polypeptide: Deoxyribose-phosphate aldolase (224 aa).

Residue aspartate 94 is the Proton donor/acceptor of the active site. Lysine 156 acts as the Schiff-base intermediate with acetaldehyde in catalysis. Lysine 184 serves as the catalytic Proton donor/acceptor.

Belongs to the DeoC/FbaB aldolase family. DeoC type 1 subfamily.

The protein resides in the cytoplasm. The enzyme catalyses 2-deoxy-D-ribose 5-phosphate = D-glyceraldehyde 3-phosphate + acetaldehyde. It functions in the pathway carbohydrate degradation; 2-deoxy-D-ribose 1-phosphate degradation; D-glyceraldehyde 3-phosphate and acetaldehyde from 2-deoxy-alpha-D-ribose 1-phosphate: step 2/2. Functionally, catalyzes a reversible aldol reaction between acetaldehyde and D-glyceraldehyde 3-phosphate to generate 2-deoxy-D-ribose 5-phosphate. The protein is Deoxyribose-phosphate aldolase of Methanocella arvoryzae (strain DSM 22066 / NBRC 105507 / MRE50).